The primary structure comprises 686 residues: Lysophospholipase 3 (686 aa).

The signal sequence occupies residues 1-26 (MIRPLCSKIIISYIFAISQFLLAANA). Positions 39-592 (SCPDDINLVR…KNYCWNGTLD (554 aa)) constitute a PLA2c domain. N-linked (GlcNAc...) asparagine glycans are attached at residues asparagine 56, asparagine 82, asparagine 129, asparagine 166, asparagine 221, asparagine 283, asparagine 313, asparagine 351, asparagine 495, asparagine 519, asparagine 547, asparagine 571, asparagine 588, and asparagine 614. The GPI-anchor amidated asparagine moiety is linked to residue asparagine 659. The propeptide at 660-686 (SGSHLSGISVKFSAMIMLTLLMFTGAV) is removed in mature form.

It belongs to the lysophospholipase family.

It localises to the cell membrane. It catalyses the reaction a 1-acyl-sn-glycero-3-phosphocholine + H2O = sn-glycerol 3-phosphocholine + a fatty acid + H(+). Sequentially removes both fatty acyl groups from diacylglycerophospholipids and therefore has both phospholipase A and lysophospholipase activities. Substrate preference is phosphatidylserine &gt; phosphatidylinositol. Does not cleave phosphatidylcholine, phosphatidylethanolamine, phosphatidic acid and phosphatidylinositol-bisphosphate. Mainly responsible for the degradation of phosphatidylinositol in vivo. The polypeptide is Lysophospholipase 3 (PLB3) (Saccharomyces cerevisiae (strain ATCC 204508 / S288c) (Baker's yeast)).